Reading from the N-terminus, the 380-residue chain is Glucose-1-phosphate adenylyltransferase (380 aa).

Alpha-D-glucose 1-phosphate-binding positions include glycine 164, 179–180 (EK), and serine 190.

Belongs to the bacterial/plant glucose-1-phosphate adenylyltransferase family. Homotetramer.

The enzyme catalyses alpha-D-glucose 1-phosphate + ATP + H(+) = ADP-alpha-D-glucose + diphosphate. It participates in glycan biosynthesis; glycogen biosynthesis. In terms of biological role, involved in the biosynthesis of ADP-glucose, a building block required for the elongation reactions to produce glycogen. Catalyzes the reaction between ATP and alpha-D-glucose 1-phosphate (G1P) to produce pyrophosphate and ADP-Glc. The sequence is that of Glucose-1-phosphate adenylyltransferase from Ligilactobacillus salivarius (strain UCC118) (Lactobacillus salivarius).